Consider the following 152-residue polypeptide: Regulatory protein RecX (152 aa).

The protein belongs to the RecX family.

It localises to the cytoplasm. Functionally, modulates RecA activity. The protein is Regulatory protein RecX of Haemophilus influenzae (strain 86-028NP).